The following is a 237-amino-acid chain: N-(5'-phosphoribosyl)anthranilate isomerase (237 aa).

The protein belongs to the TrpF family.

The catalysed reaction is N-(5-phospho-beta-D-ribosyl)anthranilate = 1-(2-carboxyphenylamino)-1-deoxy-D-ribulose 5-phosphate. It functions in the pathway amino-acid biosynthesis; L-tryptophan biosynthesis; L-tryptophan from chorismate: step 3/5. This is N-(5'-phosphoribosyl)anthranilate isomerase from Desulfitobacterium hafniense (strain DSM 10664 / DCB-2).